Consider the following 395-residue polypeptide: Putative phosphatidate cytidylyltransferase (395 aa).

A run of 9 helical transmembrane segments spans residues 13–33 (STVFVVLLIVFCFFLMFSAFA), 78–98 (FAFGLVIVLFISVIAVLMNWE), 115–135 (SLLSGIMVSGGMIPTFFVIYF), 144–164 (WIWTASFAGMIVFLWAVYMIS), 177–197 (IYSLGAVICFIACIGTIYFSV), 201–221 (WTTIFLLIAIGVCTDTFAYLF), 242–262 (AFFGVTGTVLTISIICVLYSI), 306–326 (FYIYWWVSTLALIFTASIFAI), and 358–378 (FDSSSFLISFFFIYHVIAGIS).

This sequence belongs to the CDS family.

It is found in the cell membrane. The enzyme catalyses a 1,2-diacyl-sn-glycero-3-phosphate + CTP + H(+) = a CDP-1,2-diacyl-sn-glycerol + diphosphate. It participates in phospholipid metabolism; CDP-diacylglycerol biosynthesis; CDP-diacylglycerol from sn-glycerol 3-phosphate: step 3/3. In Mycoplasma pneumoniae (strain ATCC 29342 / M129 / Subtype 1) (Mycoplasmoides pneumoniae), this protein is Putative phosphatidate cytidylyltransferase (cdsA).